Here is a 181-residue protein sequence, read N- to C-terminus: Protein GrpE (181 aa).

A compositionally biased stretch (acidic residues) spans methionine 1–valine 24. Residues methionine 1–serine 26 are disordered.

The protein belongs to the GrpE family. Homodimer.

Its subcellular location is the cytoplasm. Functionally, participates actively in the response to hyperosmotic and heat shock by preventing the aggregation of stress-denatured proteins, in association with DnaK and GrpE. It is the nucleotide exchange factor for DnaK and may function as a thermosensor. Unfolded proteins bind initially to DnaJ; upon interaction with the DnaJ-bound protein, DnaK hydrolyzes its bound ATP, resulting in the formation of a stable complex. GrpE releases ADP from DnaK; ATP binding to DnaK triggers the release of the substrate protein, thus completing the reaction cycle. Several rounds of ATP-dependent interactions between DnaJ, DnaK and GrpE are required for fully efficient folding. The chain is Protein GrpE from Rhizorhabdus wittichii (strain DSM 6014 / CCUG 31198 / JCM 15750 / NBRC 105917 / EY 4224 / RW1) (Sphingomonas wittichii).